The primary structure comprises 305 residues: Sulfate adenylyltransferase subunit 2 (305 aa).

The protein belongs to the PAPS reductase family. CysD subfamily. Heterodimer composed of CysD, the smaller subunit, and CysN.

It carries out the reaction sulfate + ATP + H(+) = adenosine 5'-phosphosulfate + diphosphate. It participates in sulfur metabolism; hydrogen sulfide biosynthesis; sulfite from sulfate: step 1/3. Functionally, with CysN forms the ATP sulfurylase (ATPS) that catalyzes the adenylation of sulfate producing adenosine 5'-phosphosulfate (APS) and diphosphate, the first enzymatic step in sulfur assimilation pathway. APS synthesis involves the formation of a high-energy phosphoric-sulfuric acid anhydride bond driven by GTP hydrolysis by CysN coupled to ATP hydrolysis by CysD. The protein is Sulfate adenylyltransferase subunit 2 of Pseudomonas aeruginosa (strain LESB58).